The following is a 462-amino-acid chain: GTPase Der (462 aa).

EngA-type G domains are found at residues 9 to 171 (KTIA…GLTK) and 201 to 372 (IQVG…ECFS). Residues 15–22 (GQPNVGKS), 62–66 (DTGGM), 123–126 (NKID), 207–214 (GRVNVGKS), 254–258 (DTAGI), and 318–321 (NKWD) each bind GTP. The 85-residue stretch at 373–457 (KRIPTSLLNS…PLIINAKDKK (85 aa)) folds into the KH-like domain.

It belongs to the TRAFAC class TrmE-Era-EngA-EngB-Septin-like GTPase superfamily. EngA (Der) GTPase family. As to quaternary structure, associates with the 50S ribosomal subunit.

Functionally, GTPase that plays an essential role in the late steps of ribosome biogenesis. The polypeptide is GTPase Der (Helicobacter acinonychis (strain Sheeba)).